Here is a 491-residue protein sequence, read N- to C-terminus: Ribonuclease G (491 aa).

The S1 motif domain occupies 40 to 129 (GNIYKGRVTR…LTTDITLPSR (90 aa)). Mg(2+) contacts are provided by D305 and D348.

Belongs to the RNase E/G family. RNase G subfamily. In terms of assembly, homodimer, in equilibrium with possible higher multimers. The cofactor is Mg(2+).

Its subcellular location is the cytoplasm. Functionally, an endonuclease that acts in the processing of the 5'-end of 16S rRNA and 23S rRNA. It prefers 5'-monophosphorylated substrates and cleaves single-stranded sites rich in A and U residues; contributes to tRNA processing and mRNA turnover. The sequence is that of Ribonuclease G (rng) from Haemophilus influenzae (strain ATCC 51907 / DSM 11121 / KW20 / Rd).